The chain runs to 397 residues: 1-deoxy-D-xylulose 5-phosphate reductoisomerase (397 aa).

Residues T10, G11, S12, I13, G36, N38, and N128 each contribute to the NADPH site. K129 is a 1-deoxy-D-xylulose 5-phosphate binding site. E130 lines the NADPH pocket. D154 lines the Mn(2+) pocket. S155, E156, S180, and H203 together coordinate 1-deoxy-D-xylulose 5-phosphate. E156 contacts Mn(2+). G209 is a binding site for NADPH. N221, K222, and E225 together coordinate 1-deoxy-D-xylulose 5-phosphate. E225 is a Mn(2+) binding site.

It belongs to the DXR family. The cofactor is Mg(2+). Mn(2+) is required as a cofactor.

The catalysed reaction is 2-C-methyl-D-erythritol 4-phosphate + NADP(+) = 1-deoxy-D-xylulose 5-phosphate + NADPH + H(+). The protein operates within isoprenoid biosynthesis; isopentenyl diphosphate biosynthesis via DXP pathway; isopentenyl diphosphate from 1-deoxy-D-xylulose 5-phosphate: step 1/6. In terms of biological role, catalyzes the NADPH-dependent rearrangement and reduction of 1-deoxy-D-xylulose-5-phosphate (DXP) to 2-C-methyl-D-erythritol 4-phosphate (MEP). The protein is 1-deoxy-D-xylulose 5-phosphate reductoisomerase of Solibacter usitatus (strain Ellin6076).